The primary structure comprises 360 residues: BLOC-1-related complex subunit 6 (360 aa).

Positions 1–10 (MEAARGRLGP) are enriched in basic and acidic residues. A disordered region spans residues 1-201 (MEAARGRLGP…AGAGGGRRAT (201 aa)). Residues 23-35 (VTFSGRPSRTLSK) are compositionally biased toward polar residues. Residue Thr41 is modified to Phosphothreonine. The segment covering 71-83 (HRPELDTWEDKPS) has biased composition (basic and acidic residues). Residues 89–100 (SGARGSRGTSGS) are compositionally biased toward low complexity. At Ser130 the chain carries Phosphoserine. Acidic residues predominate over residues 144-156 (EGDDDDDGDDEEA). Ser173 carries the phosphoserine modification. The span at 179 to 198 (GACGGGGSSSSGEAGAGGGR) shows a compositional bias: gly residues. Phosphothreonine is present on Thr201. Ser204 carries the phosphoserine modification.

The protein belongs to the BORCS6 family. As to quaternary structure, component of the BLOC-one-related complex (BORC) which is composed of BLOC1S1, BLOC1S2, BORCS5, BORCS6, BORCS7, BORCS8, KXD1 and SNAPIN.

The protein resides in the lysosome membrane. Functionally, as part of the BORC complex may play a role in lysosomes movement and localization at the cell periphery. Associated with the cytosolic face of lysosomes, the BORC complex may recruit ARL8B and couple lysosomes to microtubule plus-end-directed kinesin motor. In Rattus norvegicus (Rat), this protein is BLOC-1-related complex subunit 6.